The sequence spans 208 residues: Coiled-coil domain-containing protein 25 (208 aa).

Residues 1–105 (MVFYFTSSSV…SNLKKTADMD (105 aa)) are Extracellular-facing. The interval 21-25 (KDKYE) is DNA-binding. Position 23 is an N6-acetyllysine (lysine 23). A helical membrane pass occupies residues 106 to 122 (VGQIGFHRQKDVKIVTV). The stretch at 117–187 (VKIVTVEKKV…REMDELRSYS (71 aa)) forms a coiled coil. At 123-208 (EKKVNEILNR…QDGNDSDEFM (86 aa)) the chain is on the cytoplasmic side. The span at 144–184 (LAAEKEGRDREERNEKKAQIQEMKRKEKEEMKKKREMDELR) shows a compositional bias: basic and acidic residues. A disordered region spans residues 144-208 (LAAEKEGRDR…QDGNDSDEFM (65 aa)). Serine 204 carries the post-translational modification Phosphoserine.

This sequence belongs to the CCDC25 family. Interacts (via cytoplasmic region) with ILK.

The protein localises to the cell membrane. Its subcellular location is the endomembrane system. Its function is as follows. Transmembrane receptor that senses neutrophil extracellular traps (NETs) and triggers the ILK-PARVB pathway to enhance cell motility. NETs are mainly composed of DNA fibers and are released by neutrophils to bind pathogens during inflammation. Formation of NETs is also associated with cancer metastasis, NET-DNA acting as a chemotactic factor to attract cancer cells. Specifically binds NETs on its extracellular region, in particular the 8-OHdG-enriched DNA present in NETs, and recruits ILK, initiating the ILK-PARVB cascade to induce cytoskeleton rearrangement and directional migration of cells. In the context of cancer, promotes cancer metastasis by sensing NETs and promoting migration of tumor cells. This is Coiled-coil domain-containing protein 25 from Mus musculus (Mouse).